The following is an 88-amino-acid chain: Small ribosomal subunit protein bS20 (88 aa).

It belongs to the bacterial ribosomal protein bS20 family.

Functionally, binds directly to 16S ribosomal RNA. The protein is Small ribosomal subunit protein bS20 of Bacillus licheniformis (strain ATCC 14580 / DSM 13 / JCM 2505 / CCUG 7422 / NBRC 12200 / NCIMB 9375 / NCTC 10341 / NRRL NRS-1264 / Gibson 46).